The following is a 129-amino-acid chain: MAKEATRVRRRERKNIVSGVAHVNASFNNTMITITDAQGNTISWSSAGAMGFKGSRKSTPYAAQVAAEDAGRKAAEHGMRTLEVEVSGPGSGRESALRALQAAGFTVTSIRDVTPIPHNGCRPRKRRRV.

It belongs to the universal ribosomal protein uS11 family. In terms of assembly, part of the 30S ribosomal subunit. Interacts with proteins S7 and S18. Binds to IF-3.

Functionally, located on the platform of the 30S subunit, it bridges several disparate RNA helices of the 16S rRNA. Forms part of the Shine-Dalgarno cleft in the 70S ribosome. The polypeptide is Small ribosomal subunit protein uS11 (Methylobacterium nodulans (strain LMG 21967 / CNCM I-2342 / ORS 2060)).